The following is a 168-amino-acid chain: Phosphopantetheine adenylyltransferase (168 aa).

Thr-10 contacts substrate. ATP is bound by residues 10–11 (TF) and His-18. 3 residues coordinate substrate: Lys-42, Leu-75, and Arg-89. ATP-binding positions include 90–92 (GVR), Glu-100, and 125–131 (YTYVASS).

It belongs to the bacterial CoaD family. In terms of assembly, homohexamer. The cofactor is Mg(2+).

The protein resides in the cytoplasm. It carries out the reaction (R)-4'-phosphopantetheine + ATP + H(+) = 3'-dephospho-CoA + diphosphate. Its pathway is cofactor biosynthesis; coenzyme A biosynthesis; CoA from (R)-pantothenate: step 4/5. Its function is as follows. Reversibly transfers an adenylyl group from ATP to 4'-phosphopantetheine, yielding dephospho-CoA (dPCoA) and pyrophosphate. This chain is Phosphopantetheine adenylyltransferase, found in Prosthecochloris aestuarii (strain DSM 271 / SK 413).